The chain runs to 480 residues: Adenylosuccinate lyase (480 aa).

5 residues coordinate AMP: R14, Y15, R79, H80, and D81. H80 provides a ligand contact to fumarate. The active-site Proton donor/acceptor is H153. Q236 contributes to the AMP binding site. Q236 is a fumarate binding site. Q236 is a N(6)-(1,2-dicarboxyethyl)-AMP binding site. S284 functions as the Proton donor/acceptor in the catalytic mechanism. Fumarate contacts are provided by S285, K290, and N292. S285, K290, and N292 together coordinate N(6)-(1,2-dicarboxyethyl)-AMP. An AMP-binding site is contributed by R298. Positions 324, 329, and 333 each coordinate N(6)-(1,2-dicarboxyethyl)-AMP. S329 and R333 together coordinate AMP.

Belongs to the lyase 1 family. Adenylosuccinate lyase subfamily. In terms of assembly, homotetramer.

The catalysed reaction is N(6)-(1,2-dicarboxyethyl)-AMP = fumarate + AMP. Its pathway is purine metabolism; AMP biosynthesis via salvage pathway. Catalyzes conversion of succinyladenosine monophosphate (SAMP) to AMP and fumarate on the purine salvage pathway. The sequence is that of Adenylosuccinate lyase from Schistosoma mansoni (Blood fluke).